Here is a 1916-residue protein sequence, read N- to C-terminus: MAHIKLDTLDVVQRPGTTRRSNSNSGRSSACSSGSLSPVPIIPIIAISRDTDDSESESEIETEPARLFQRRMSIKCTNNLAAIIKEGFLLKHTWSFQRWRRRYFRLKRNVLFHAKDFQCDVLDEIDLSDLCYFECGIKNVNHSSQIITPTRSLVLCAESRREMEDWLGSLKTATTPQRPRGDSFLIEQHDILSNHHHWYATSHARPTYCNVCRDALSGVTSHGLSCEVCKCKVHKRCAAKSIANCKWTTLASVGKDIIEQADGSIIMPHQWMEGNLPVSSVCAVCKKTCGSVLRLQDWRCLWCRATVHVACRPQMAVACPIGPAKLSVVPPTSVHSISTDDAWDVASPKGNFSPLLVFVNSKSGDNQGVKFLRRFKQLLNPAQVFDLISTGPSLGLRLFRHFEMFRILVCSGDGSVGWVLSEIDRFNMHKQCQVAVMPLGTGNDLARVLGWGSSCDDDTHLPQILERYESASTKMLDRWSIMVFEKAIAVPKTPKMSITTEQEALLTGMVTSANHHLRFIVETNDTQTLISSTQSLCDTIDDLVGRISEHHREDEQLAVKCDILRQKLNMLLDALQEEEMGAHSGDDLIATIRSLIARSIPQTPGTSAPLLNPSISIEKNEKDEINTKERRSSRSLRSSEKEALQSRANSVKRAIYNVVEHSEPGRPKRYQRKLSITPFEALKLPTTASGDSTPCSSPLPIIPPINIISPTMETSRLTCISPLPDTRRDSVDESFFNSISLPAPRQFADSRRSSGVPDVIQEIEEGANGETVYRIGRMSLSGGANIDDAGNRLSPCSDGGENTPTERKVDFLRVPILTGEPIVDPLSDYRPIEVFERTYYMNRELDRGKEGTEEKKGDIEKEKSSGTDVEKEDNMPTEKQALVHICNLQVPGIVVTPNSQNVYTSASLTIIDTDAQTTNEQSSSEEIAGEASDVLSAISNEECSVASEIFDKQDAGHTLGDIIQSLDASNFTHIDSPETSDETEAMPGESIMDDISSVLGHDITYALQDNTLTDDTTTLCSEHVGPPKPPRKKSLSALTRGHSHPRRRNSSPPRIPRLARMDSDDNPQQFGFENIVFEIDNRCDDQKMREPPRYCSLAQFVEGNDIARQSFKQLMLEQHGSNDNDTEYPEQQTPTNTMTNLMATTSEDELSTQTAIKIEIQDVDATMVRNINSSMKANTILTTSTSPTKKSGHGQDISVVVRPPTPLRGDSVKPSGSLLLDGSGGAISMAMGCSSLLGVRAMNAEIRRHSSHAPGLAVREIDKDKDRRHSGFNPNLLTLDPEHARFLSSSPAASRRISCGSLFKKNQKIATKRGYGLFSVRFLVVAEPDIRLATLALIRPLIPLPNEALPNLQTLKGSKSSLFMGSTLFGFDQFAAGDKEKDEKGCKDKEKTPTEETGRKLPIINPLVRLPNWPNLANGGGFISKCLLANADTLCAAVSPLMDPDETLLAGYHEKCVMNNYFGIGIDAKISLDFHNKREEHPEKCRSRARNYMWYGVLGSKQLLQKTCKNLEQRVQLECDGQRIPLPELQGIVILNIPSFMGGTNFWGSSTKKDDIFLPPSFDDRVLEVVAVFGSVQMAASRLINLQHHRIAQCQSVQINILGDEEIPIQVDGEAWLQPPGMIRILHKNRVQMLCRNRSLELSLKSWQEKQRQHSISIQRDTSSTTSEHATSTDEVISERECYVLLNFIEAVSSLVKWVKFLIISHPALQHDLYAVACRASEALESIHPQGKLLEGPSLRTKLVEVIDSSRQLYDDACTLLRDRGHSLILREDLETKLSAALANMEMELKKCSVQKCIDGKLRAYFNVLAPNEEPDARRKSRPFWVRLRSGSTAGQQAFKPPLTNTREAANNWSVNEVVTWLETMQLSEYVDSFLKNDIRGKELITLGRRDLKDLGVVKVGHVKRILQAIKDLSEN.

Residues 1–36 (MAHIKLDTLDVVQRPGTTRRSNSNSGRSSACSSGSL) form a disordered region. Low complexity predominate over residues 19–36 (RRSNSNSGRSSACSSGSL). The PH domain occupies 82–175 (AIIKEGFLLK…WLGSLKTATT (94 aa)). 2 consecutive Phorbol-ester/DAG-type zinc fingers follow at residues 195 to 245 (HHHW…IANC) and 268 to 319 (PHQW…AVAC). Residues 350-486 (GNFSPLLVFV…DRWSIMVFEK (137 aa)) form the DAGKc domain. A compositionally biased stretch (basic and acidic residues) spans 623–644 (DEINTKERRSSRSLRSSEKEAL). 4 disordered regions span residues 623-648 (DEIN…QSRA), 846-874 (DRGK…KEDN), 1018-1067 (TLCS…DDNP), and 1183-1214 (TSTS…SVKP). Residues 1853–1916 (WSVNEVVTWL…LQAIKDLSEN (64 aa)) enclose the SAM domain.

This sequence belongs to the eukaryotic diacylglycerol kinase family.

The protein localises to the cytoplasm. It carries out the reaction a 1,2-diacyl-sn-glycerol + ATP = a 1,2-diacyl-sn-glycero-3-phosphate + ADP + H(+). Phosphorylates diacylglycerol (DAG) to generate phosphatidic acid (PA). The sequence is that of Diacylglycerol kinase eta from Drosophila ananassae (Fruit fly).